Reading from the N-terminus, the 136-residue chain is Protein PsiE (136 aa).

The next 4 helical transmembrane spans lie at 15–35 (ILQN…VVFL), 55–75 (YELV…ALIV), 83–103 (HFPL…LIIV), and 108–128 (PMDV…LWLC).

Belongs to the PsiE family.

Its subcellular location is the cell inner membrane. The polypeptide is Protein PsiE (Salmonella gallinarum (strain 287/91 / NCTC 13346)).